A 340-amino-acid chain; its full sequence is GTPase Obg (340 aa).

One can recognise an Obg domain in the interval 1 to 159 (MKFLDQAKVY…RTLWLRLKLI (159 aa)). Residues 160 to 327 (ADAGIIGLPN…LLRAGAHIIE (168 aa)) enclose the OBG-type G domain. GTP contacts are provided by residues 166–173 (GLPNAGKS), 191–195 (FTTLY), 212–215 (DIPG), 279–282 (SQID), and 308–310 (SAV). The Mg(2+) site is built by Ser173 and Thr193.

Belongs to the TRAFAC class OBG-HflX-like GTPase superfamily. OBG GTPase family. As to quaternary structure, monomer. The cofactor is Mg(2+).

Its subcellular location is the cytoplasm. Functionally, an essential GTPase which binds GTP, GDP and possibly (p)ppGpp with moderate affinity, with high nucleotide exchange rates and a fairly low GTP hydrolysis rate. Plays a role in control of the cell cycle, stress response, ribosome biogenesis and in those bacteria that undergo differentiation, in morphogenesis control. The chain is GTPase Obg from Bartonella henselae (strain ATCC 49882 / DSM 28221 / CCUG 30454 / Houston 1) (Rochalimaea henselae).